Consider the following 72-residue polypeptide: Translational regulator CsrA (72 aa).

The protein belongs to the CsrA/RsmA family. As to quaternary structure, homodimer; the beta-strands of each monomer intercalate to form a hydrophobic core, while the alpha-helices form wings that extend away from the core.

It localises to the cytoplasm. Its function is as follows. A translational regulator that binds mRNA to regulate translation initiation and/or mRNA stability. Usually binds in the 5'-UTR at or near the Shine-Dalgarno sequence preventing ribosome-binding, thus repressing translation. Its main target seems to be the major flagellin gene, while its function is anatagonized by FliW. This chain is Translational regulator CsrA, found in Lachnoclostridium phytofermentans (strain ATCC 700394 / DSM 18823 / ISDg) (Clostridium phytofermentans).